The sequence spans 452 residues: Sensor histidine kinase HprS (452 aa).

Residues 1–9 are Cytoplasmic-facing; that stretch reads MKRLSITVR. The chain crosses the membrane as a helical span at residues 10-30; sequence LTLLFILLLSVAGAGIVWTLY. The Periplasmic portion of the chain corresponds to 31–158; that stretch reads NGLASELKWR…ARHNMLEQYK (128 aa). The chain crosses the membrane as a helical span at residues 159-179; the sequence is INSIIICIVAIVLCSVLSPLL. Residues 180-452 lie on the Cytoplasmic side of the membrane; it reads IRTGLREIKK…VFRITLPQRN (273 aa). Residues 181-234 form the HAMP domain; that stretch reads RTGLREIKKLSGVTEALNYNDSREPVEVSALPRELKPLGQALNKMHHALVKDFE. One can recognise a Histidine kinase domain in the interval 242–452; it reads DLAHELRTPI…VFRITLPQRN (211 aa). Phosphohistidine; by autocatalysis is present on His-245.

Post-translationally, autophosphorylated.

It is found in the cell inner membrane. It catalyses the reaction ATP + protein L-histidine = ADP + protein N-phospho-L-histidine.. Its function is as follows. Member of a two-component regulatory system HprR/HprS involved in response to hydrogen peroxide. Senses H(2)O(2), maybe via the redox state of the membrane. Activates HprR by phosphorylation. Can also phosphorylate CusR. The sequence is that of Sensor histidine kinase HprS from Escherichia coli (strain K12).